A 693-amino-acid polypeptide reads, in one-letter code: Elongation factor G (693 aa).

In terms of domain architecture, tr-type G spans 8-282 (EKTRNIGIMA…AVIDYLPSPL (275 aa)). GTP contacts are provided by residues 17–24 (AHVDAGKT), 81–85 (DTPGH), and 135–138 (NKMD).

This sequence belongs to the TRAFAC class translation factor GTPase superfamily. Classic translation factor GTPase family. EF-G/EF-2 subfamily.

The protein resides in the cytoplasm. In terms of biological role, catalyzes the GTP-dependent ribosomal translocation step during translation elongation. During this step, the ribosome changes from the pre-translocational (PRE) to the post-translocational (POST) state as the newly formed A-site-bound peptidyl-tRNA and P-site-bound deacylated tRNA move to the P and E sites, respectively. Catalyzes the coordinated movement of the two tRNA molecules, the mRNA and conformational changes in the ribosome. This Streptococcus pneumoniae (strain P1031) protein is Elongation factor G.